Reading from the N-terminus, the 37-residue chain is Large ribosomal subunit protein bL36c (37 aa).

The protein belongs to the bacterial ribosomal protein bL36 family.

It is found in the plastid. It localises to the chloroplast. The polypeptide is Large ribosomal subunit protein bL36c (Pelargonium hortorum (Common geranium)).